A 229-amino-acid polypeptide reads, in one-letter code: MGKKYTESVKLVDKNTLYTVQEAIELVTKTSKAKFDETVELAVRLGVDPRHADQQVRGAVVLPHGTGKTVRVLVFAKGDKVNEAQEAGADFVGAEELVEKIQKENWFDFDVVVATPDMMGVVGRLGRVLGPKGLMPNPKSGTVTFDVAKAIADIKAGKVEYRVDKTAIIHVPIGKASFGEGKLSDNFHVLMEAVVKAKPAAAKGQYIKSVAISSTMGPGIKINPGKVLE.

The protein belongs to the universal ribosomal protein uL1 family. As to quaternary structure, part of the 50S ribosomal subunit.

Its function is as follows. Binds directly to 23S rRNA. The L1 stalk is quite mobile in the ribosome, and is involved in E site tRNA release. Protein L1 is also a translational repressor protein, it controls the translation of the L11 operon by binding to its mRNA. This chain is Large ribosomal subunit protein uL1, found in Clostridium botulinum (strain 657 / Type Ba4).